A 430-amino-acid chain; its full sequence is Sphingosine-1-phosphate phosphatase 1 (430 aa).

The disordered stretch occupies residues 34–100; it reads GSPKAGEDAE…PRRAGSLRRN (67 aa). The residue at position 101 (S101) is a Phosphoserine. T103 carries the post-translational modification Phosphothreonine. 4 helical membrane passes run 121–141, 152–172, 193–213, and 216–236; these read FCFG…PFWI, LVII…IIRW, MPST…LLTY, and WQYP…LVCL. Residues 167–175 are phosphatase sequence motif I; sequence KDIIRWPRP. A phosphatase sequence motif II region spans residues 194 to 197; that stretch reads PSTH. The Proton donor role is filled by H197. A phosphatase sequence motif III region spans residues 237–248; that stretch reads SRIYMGMHSILD. Residue H244 is the Nucleophile of the active site. Helical transmembrane passes span 246–266, 279–299, 311–331, 348–368, and 409–429; these read ILDV…FYPL, YAPL…FTLD, ILGS…LGIS, VTLF…VLFV, and YGTV…FIGI.

The protein belongs to the type 2 lipid phosphate phosphatase family.

Its subcellular location is the endoplasmic reticulum membrane. It localises to the cell membrane. The enzyme catalyses sphinganine 1-phosphate + H2O = sphinganine + phosphate. It catalyses the reaction sphing-4-enine 1-phosphate + H2O = sphing-4-enine + phosphate. In terms of biological role, specifically dephosphorylates sphingosine 1-phosphate (S1P), dihydro-S1P, and phyto-S1P. Does not act on ceramide 1-phosphate, lysophosphatidic acid or phosphatidic acid. Sphingosine-1-phosphate phosphatase activity is needed for efficient recycling of sphingosine into the sphingolipid synthesis pathway. Regulates the intracellular levels of the bioactive sphingolipid metabolite S1P that regulates diverse biological processes acting both as an extracellular receptor ligand or as an intracellular second messenger. Involved in efficient ceramide synthesis from exogenous sphingoid bases. Converts S1P to sphingosine, which is readily metabolized to ceramide via ceramide synthase. In concert with sphingosine kinase 2 (SphK2), recycles sphingosine into ceramide through a phosphorylation/dephosphorylation cycle. Regulates endoplasmic-to-Golgi trafficking of ceramides, resulting in the regulation of ceramide levels in the endoplasmic reticulum, preferentially long-chain ceramide species, and influences the anterograde membrane transport of both ceramide and proteins from the endoplasmic reticulum to the Golgi apparatus. The modulation of intracellular ceramide levels in turn regulates apoptosis. Via S1P levels, modulates resting tone, intracellular Ca(2+) and myogenic vasoconstriction in resistance arteries. Also involved in unfolded protein response (UPR) and ER stress-induced autophagy via regulation of intracellular S1P levels. Involved in the regulation of epidermal homeostasis and keratinocyte differentiation. This is Sphingosine-1-phosphate phosphatase 1 from Rattus norvegicus (Rat).